Reading from the N-terminus, the 834-residue chain is Membrane-associated lipoprotein (834 aa).

An N-terminal signal peptide occupies residues 1-25 (MKKNKLTTLALILPITILTPIVIAS). The N-palmitoyl cysteine moiety is linked to residue Cys-26. The S-diacylglycerol cysteine moiety is linked to residue Cys-26. A Lipoprotein-associated type-17 domain is found at 143–237 (RLKDTFDFKL…LLEVSGFKSN (95 aa)).

The protein resides in the cell membrane. The sequence is that of Membrane-associated lipoprotein from Ureaplasma parvum serovar 3 (strain ATCC 700970).